A 298-amino-acid polypeptide reads, in one-letter code: Oligodendrocyte transcription factor 2 (298 aa).

Residues 1–13 (MDSDASLVSSRPS) are compositionally biased toward polar residues. 2 disordered regions span residues 1-60 (MDSD…SAEL) and 79-102 (SSSS…MTEP). A compositionally biased stretch (gly residues) spans 26-41 (NKGGGGGGGGGGGFTG). Positions 79-91 (SSSSSASSASSAS) are enriched in low complexity. Positions 106–160 (QLRLKINSRERKRMHDLNIAMDGLREVMPYAHGPSVRKLSKIATLLLARNYILML) constitute a bHLH domain.

Its subcellular location is the nucleus. Required for oligodendrocyte and motor neuron specification in the spinal cord. The polypeptide is Oligodendrocyte transcription factor 2 (OLIG2) (Gallus gallus (Chicken)).